The sequence spans 111 residues: MEAKAIAKYVRMSPRKVGVVLDLVRGKDVNEAFAILNYTPREAAVVINKVLKSAVANAENNLELDPSRLYVAEAYACQGPTLKRYQPHAQGRAFRINKRTSHVTLVVKERE.

It belongs to the universal ribosomal protein uL22 family. As to quaternary structure, part of the 50S ribosomal subunit.

This protein binds specifically to 23S rRNA; its binding is stimulated by other ribosomal proteins, e.g. L4, L17, and L20. It is important during the early stages of 50S assembly. It makes multiple contacts with different domains of the 23S rRNA in the assembled 50S subunit and ribosome. In terms of biological role, the globular domain of the protein is located near the polypeptide exit tunnel on the outside of the subunit, while an extended beta-hairpin is found that lines the wall of the exit tunnel in the center of the 70S ribosome. The chain is Large ribosomal subunit protein uL22 from Clostridium tetani (strain Massachusetts / E88).